A 595-amino-acid chain; its full sequence is Isoprene synthase, chloroplastic (595 aa).

The transit peptide at 1 to 37 (MATELLCLHRPISLTHKLFRNPLPKVIQATPLTLKLR) directs the protein to the chloroplast. Position 345 (D345) interacts with dimethylallyl diphosphate. Positions 345 and 349 each coordinate Mg(2+). The DDXXD motif motif lies at 345–349 (DDIYD). E423, R486, and N489 together coordinate dimethylallyl diphosphate. Residues N489, S493, and E497 each contribute to the Mg(2+) site.

Belongs to the terpene synthase family. Tpsb subfamily. As to quaternary structure, homodimer. Mg(2+) is required as a cofactor. Requires Mn(2+) as cofactor.

It is found in the plastid. Its subcellular location is the chloroplast. The catalysed reaction is dimethylallyl diphosphate = isoprene + diphosphate. The protein operates within secondary metabolite biosynthesis; terpenoid biosynthesis. Competitive inhibition is mediated by geranyl diphosphate (GPP). In terms of biological role, lyase that catalyzes the formation of isoprene from dimethylallyl diphosphate via a syn-periplanar elimination mechanism in which the diphosphate-leaving group serves as a general base. This chain is Isoprene synthase, chloroplastic, found in Populus canescens (Grey poplar).